The primary structure comprises 1332 residues: DNA-directed RNA polymerase subunit beta' (1332 aa).

Residues cysteine 60, cysteine 62, cysteine 75, and cysteine 78 each contribute to the Zn(2+) site. Mg(2+) is bound by residues aspartate 535, aspartate 537, and aspartate 539. The Zn(2+) site is built by cysteine 894, cysteine 977, cysteine 984, and cysteine 987.

Belongs to the RNA polymerase beta' chain family. As to quaternary structure, the RNAP catalytic core consists of 2 alpha, 1 beta, 1 beta' and 1 omega subunit. When a sigma factor is associated with the core the holoenzyme is formed, which can initiate transcription. Mg(2+) serves as cofactor. Requires Zn(2+) as cofactor.

It carries out the reaction RNA(n) + a ribonucleoside 5'-triphosphate = RNA(n+1) + diphosphate. Its function is as follows. DNA-dependent RNA polymerase catalyzes the transcription of DNA into RNA using the four ribonucleoside triphosphates as substrates. This is DNA-directed RNA polymerase subunit beta' from Corynebacterium kroppenstedtii (strain DSM 44385 / JCM 11950 / CIP 105744 / CCUG 35717).